Consider the following 77-residue polypeptide: UPF0213 protein VNG_2274C (77 aa).

The 75-residue stretch at 1-75 folds into the GIY-YIG domain; it reads MHHVYVIECS…KQLSRAQKEA (75 aa).

This sequence belongs to the UPF0213 family.

The polypeptide is UPF0213 protein VNG_2274C (Halobacterium salinarum (strain ATCC 700922 / JCM 11081 / NRC-1) (Halobacterium halobium)).